Reading from the N-terminus, the 238-residue chain is NEDD4-binding protein 2-like 1 (238 aa).

Disordered regions lie at residues 1 to 36 (MEDSFLESFGRLSLQQRQQQPPPRPPPARGPPPRRH) and 183 to 212 (VLHAEKPSRANRNQGRNSEPSSGSGYWNTY). Residues 20–31 (QPPPRPPPARGP) show a composition bias toward pro residues. A compositionally biased stretch (polar residues) spans 192-212 (ANRNQGRNSEPSSGSGYWNTY).

Interacts with dynactin subunit proteins, including DCTN4, DCTN5 and DCTN5.

Might play a role in adipocyte differentiation and triglyceride accumulation. The protein is NEDD4-binding protein 2-like 1 (N4bp2l1) of Mus musculus (Mouse).